The chain runs to 280 residues: Acetylglutamate kinase (280 aa).

Substrate is bound by residues 64 to 65 (GG), Arg86, and Asn179.

Belongs to the acetylglutamate kinase family. ArgB subfamily.

The protein localises to the cytoplasm. The enzyme catalyses N-acetyl-L-glutamate + ATP = N-acetyl-L-glutamyl 5-phosphate + ADP. The protein operates within amino-acid biosynthesis; L-arginine biosynthesis; N(2)-acetyl-L-ornithine from L-glutamate: step 2/4. Functionally, catalyzes the ATP-dependent phosphorylation of N-acetyl-L-glutamate. This Campylobacter fetus subsp. fetus (strain 82-40) protein is Acetylglutamate kinase.